The following is a 163-amino-acid chain: Ribosome maturation factor RimP (163 aa).

Belongs to the RimP family.

Its subcellular location is the cytoplasm. Required for maturation of 30S ribosomal subunits. The chain is Ribosome maturation factor RimP from Bordetella petrii (strain ATCC BAA-461 / DSM 12804 / CCUG 43448).